The primary structure comprises 975 residues: Glycine dehydrogenase (decarboxylating) (975 aa).

Lysine 702 is modified (N6-(pyridoxal phosphate)lysine).

Belongs to the GcvP family. The glycine cleavage system is composed of four proteins: P, T, L and H. Pyridoxal 5'-phosphate is required as a cofactor.

It catalyses the reaction N(6)-[(R)-lipoyl]-L-lysyl-[glycine-cleavage complex H protein] + glycine + H(+) = N(6)-[(R)-S(8)-aminomethyldihydrolipoyl]-L-lysyl-[glycine-cleavage complex H protein] + CO2. The glycine cleavage system catalyzes the degradation of glycine. The P protein binds the alpha-amino group of glycine through its pyridoxal phosphate cofactor; CO(2) is released and the remaining methylamine moiety is then transferred to the lipoamide cofactor of the H protein. This Xanthomonas campestris pv. campestris (strain 8004) protein is Glycine dehydrogenase (decarboxylating).